The following is a 257-amino-acid chain: UPF0246 protein BT_3869 (257 aa).

Belongs to the UPF0246 family.

The chain is UPF0246 protein BT_3869 from Bacteroides thetaiotaomicron (strain ATCC 29148 / DSM 2079 / JCM 5827 / CCUG 10774 / NCTC 10582 / VPI-5482 / E50).